The chain runs to 344 residues: Putative esterase NocK (344 aa).

The segment at residues 1–34 is a signal peptide (tat-type signal); the sequence is MIGVTRRSGLALAVLVSSAACAGAEPVAPPPAPA. A disordered region spans residues 265–295; the sequence is GGADERRREEARPAAAPGGTSTSRETCANPD. The segment covering 266–276 has biased composition (basic and acidic residues); the sequence is GADERRREEAR.

This sequence belongs to the AB hydrolase superfamily. In terms of processing, predicted to be exported by the Tat system. The position of the signal peptide cleavage has not been experimentally proven.

This Nocardia uniformis subsp. tsuyamanensis protein is Putative esterase NocK.